The chain runs to 271 residues: Transmembrane protein 33 homolog (271 aa).

Positions 1 to 32 (MVEIVEEPDDHQSSSTGAGSSGSSSAPPPPPP) are disordered. Low complexity predominate over residues 13–25 (SSSTGAGSSGSSS). The next 3 membrane-spanning stretches (helical) occupy residues 56-76 (VLTVFFALNYMIPFIGLVPAH), 125-145 (VVFLMAAPVSMAALPVTIYAA), and 180-200 (ALGIIACSEIFLVPLLVSLIF).

Belongs to the PER33/POM33 family.

It localises to the membrane. This chain is Transmembrane protein 33 homolog, found in Caenorhabditis elegans.